Reading from the N-terminus, the 234-residue chain is Ribose-5-phosphate isomerase A (234 aa).

Substrate is bound by residues 34-37 (TGST), 90-93 (DGAD), and 103-106 (KGGG). Catalysis depends on E112, which acts as the Proton acceptor. K130 contributes to the substrate binding site.

Belongs to the ribose 5-phosphate isomerase family. As to quaternary structure, homodimer.

The catalysed reaction is aldehydo-D-ribose 5-phosphate = D-ribulose 5-phosphate. It participates in carbohydrate degradation; pentose phosphate pathway; D-ribose 5-phosphate from D-ribulose 5-phosphate (non-oxidative stage): step 1/1. Its function is as follows. Catalyzes the reversible conversion of ribose-5-phosphate to ribulose 5-phosphate. The chain is Ribose-5-phosphate isomerase A from Methanosarcina acetivorans (strain ATCC 35395 / DSM 2834 / JCM 12185 / C2A).